We begin with the raw amino-acid sequence, 604 residues long: Uptake hydrogenase large subunit (604 aa).

Residues C76, C79, C583, and C586 each contribute to the Ni(2+) site.

The protein belongs to the [NiFe]/[NiFeSe] hydrogenase large subunit family. Heterodimer of a large and a small subunit. Requires Ni(2+) as cofactor.

It is found in the cell membrane. It catalyses the reaction H2 + A = AH2. In terms of biological role, this enzyme recycles the H(2) produced by nitrogenase to increase the production of ATP and to protect nitrogenase against inhibition or damage by O(2) under carbon- or phosphate-limited conditions. This is Uptake hydrogenase large subunit (hoxL) from Afipia carboxidovorans (strain ATCC 49405 / DSM 1227 / KCTC 32145 / OM5) (Oligotropha carboxidovorans).